We begin with the raw amino-acid sequence, 400 residues long: Argininosuccinate synthase (400 aa).

ATP is bound by residues 10 to 18 (AYSGGVDTS) and A38. Y89 is a binding site for L-citrulline. An ATP-binding site is contributed by G119. L-aspartate is bound by residues T121, N125, and D126. N125 is an L-citrulline binding site. Residues R129, S177, S186, E262, and Y274 each contribute to the L-citrulline site.

It belongs to the argininosuccinate synthase family. Type 1 subfamily. Homotetramer.

The protein resides in the cytoplasm. It catalyses the reaction L-citrulline + L-aspartate + ATP = 2-(N(omega)-L-arginino)succinate + AMP + diphosphate + H(+). Its pathway is amino-acid biosynthesis; L-arginine biosynthesis; L-arginine from L-ornithine and carbamoyl phosphate: step 2/3. In Trichormus variabilis (strain ATCC 29413 / PCC 7937) (Anabaena variabilis), this protein is Argininosuccinate synthase.